The following is a 757-amino-acid chain: Catalase-peroxidase (757 aa).

Residues 101–248 (WHSAGTYRIG…LAAVQMGLIY (148 aa)) constitute a cross-link (tryptophyl-tyrosyl-methioninium (Trp-Tyr) (with M-274)). The active-site Proton acceptor is histidine 102. The segment at 213–232 (VHHPDEHRGAKEKASKNSDS) is disordered. Residues 248 to 274 (YVNPEGPDGCPDPLASARDIRETFARM) constitute a cross-link (tryptophyl-tyrosyl-methioninium (Tyr-Met) (with W-101)). Residue histidine 289 coordinates heme b.

This sequence belongs to the peroxidase family. Peroxidase/catalase subfamily. In terms of assembly, homodimer or homotetramer. Heme b is required as a cofactor. Post-translationally, formation of the three residue Trp-Tyr-Met cross-link is important for the catalase, but not the peroxidase activity of the enzyme.

It carries out the reaction H2O2 + AH2 = A + 2 H2O. The catalysed reaction is 2 H2O2 = O2 + 2 H2O. Its function is as follows. Bifunctional enzyme with both catalase and broad-spectrum peroxidase activity. In Xylella fastidiosa (strain M23), this protein is Catalase-peroxidase.